The chain runs to 178 residues: Large ribosomal subunit protein uL6 (178 aa).

The segment covering 155–169 (PYKGKGIKYDNEQIR) has biased composition (basic and acidic residues). The disordered stretch occupies residues 155–178 (PYKGKGIKYDNEQIRRKAGKSGGK).

Belongs to the universal ribosomal protein uL6 family. In terms of assembly, part of the 50S ribosomal subunit.

In terms of biological role, this protein binds to the 23S rRNA, and is important in its secondary structure. It is located near the subunit interface in the base of the L7/L12 stalk, and near the tRNA binding site of the peptidyltransferase center. The chain is Large ribosomal subunit protein uL6 from Nitratidesulfovibrio vulgaris (strain DSM 19637 / Miyazaki F) (Desulfovibrio vulgaris).